Consider the following 189-residue polypeptide: Probable nicotinate-nucleotide adenylyltransferase (189 aa).

This sequence belongs to the NadD family.

The enzyme catalyses nicotinate beta-D-ribonucleotide + ATP + H(+) = deamido-NAD(+) + diphosphate. The protein operates within cofactor biosynthesis; NAD(+) biosynthesis; deamido-NAD(+) from nicotinate D-ribonucleotide: step 1/1. Catalyzes the reversible adenylation of nicotinate mononucleotide (NaMN) to nicotinic acid adenine dinucleotide (NaAD). The sequence is that of Probable nicotinate-nucleotide adenylyltransferase from Bacillus cereus (strain G9842).